The chain runs to 379 residues: Cytochrome b (379 aa).

4 consecutive transmembrane segments (helical) span residues 34–54 (FGSL…LLAM), 78–99 (WLIR…YLHI), 114–134 (WNTG…GYVL), and 179–199 (FFAL…IHLT). 2 residues coordinate heme b: His-84 and His-98. Heme b-binding residues include His-183 and His-197. His-202 contacts a ubiquinone. Transmembrane regions (helical) follow at residues 227 to 247 (LKDA…AFFS), 289 to 309 (LGGV…PFLH), 321 to 341 (LSQI…WIGS), and 348 to 368 (FIII…VLFP).

Belongs to the cytochrome b family. As to quaternary structure, the cytochrome bc1 complex contains 11 subunits: 3 respiratory subunits (MT-CYB, CYC1 and UQCRFS1), 2 core proteins (UQCRC1 and UQCRC2) and 6 low-molecular weight proteins (UQCRH/QCR6, UQCRB/QCR7, UQCRQ/QCR8, UQCR10/QCR9, UQCR11/QCR10 and a cleavage product of UQCRFS1). This cytochrome bc1 complex then forms a dimer. It depends on heme b as a cofactor.

Its subcellular location is the mitochondrion inner membrane. Its function is as follows. Component of the ubiquinol-cytochrome c reductase complex (complex III or cytochrome b-c1 complex) that is part of the mitochondrial respiratory chain. The b-c1 complex mediates electron transfer from ubiquinol to cytochrome c. Contributes to the generation of a proton gradient across the mitochondrial membrane that is then used for ATP synthesis. This chain is Cytochrome b (MT-CYB), found in Rhea americana (Greater rhea).